Reading from the N-terminus, the 224-residue chain is Ribose-5-phosphate isomerase A (224 aa).

Substrate is bound by residues 32-35, 85-88, and 98-101; these read TGST, DGAD, and KGGG. The Proton acceptor role is filled by Glu-107. Lys-125 contributes to the substrate binding site.

Belongs to the ribose 5-phosphate isomerase family. As to quaternary structure, homodimer.

The enzyme catalyses aldehydo-D-ribose 5-phosphate = D-ribulose 5-phosphate. It participates in carbohydrate degradation; pentose phosphate pathway; D-ribose 5-phosphate from D-ribulose 5-phosphate (non-oxidative stage): step 1/1. In terms of biological role, catalyzes the reversible conversion of ribose-5-phosphate to ribulose 5-phosphate. This chain is Ribose-5-phosphate isomerase A, found in Pseudomonas fluorescens (strain Pf0-1).